The primary structure comprises 600 residues: Malto-oligosyltrehalose trehalohydrolase (600 aa).

The tract at residues 1–34 (MTQTQPVTPTPPASFQTQHDPRTRLGATPLPGGA) is disordered. 273–278 (RLDATP) provides a ligand contact to substrate. The active-site Nucleophile is Asp-275. The Proton donor role is filled by Glu-308. Residues 328–332 (DDFHH), Glu-376, and 399–404 (HDQIGN) each bind substrate.

The protein belongs to the glycosyl hydrolase 13 family. As to quaternary structure, monomer.

It localises to the cytoplasm. The enzyme catalyses hydrolysis of (1-&gt;4)-alpha-D-glucosidic linkage in 4-alpha-D-[(1-&gt;4)-alpha-D-glucanosyl]n trehalose to yield trehalose and (1-&gt;4)-alpha-D-glucan.. It functions in the pathway glycan biosynthesis; trehalose biosynthesis. This chain is Malto-oligosyltrehalose trehalohydrolase (treZ), found in Deinococcus radiodurans (strain ATCC 13939 / DSM 20539 / JCM 16871 / CCUG 27074 / LMG 4051 / NBRC 15346 / NCIMB 9279 / VKM B-1422 / R1).